The following is a 556-amino-acid chain: Single-strand DNA-binding protein (556 aa).

Disordered regions lie at residues 1–95 (MDPK…SEVE) and 527–556 (FVRP…VNSL). Composition is skewed to polar residues over residues 10–25 (ENIT…TSDF) and 36–51 (VNST…GSQE). 2 stretches are compositionally biased toward basic and acidic residues: residues 52-73 (TPEH…RLDA) and 539-548 (DSRRTYESRP).

In terms of assembly, interacts with host VIP2 that promotes T-DNA integration into the host genome. Forms a complex made of virE2 and host proteins VIP1 and VBF. Forms heterodimers with the chaperone protein virE1 that prevent virE2 anarchic homopolymerization. Interacts with A.thaliana VIP1 that mediates its translocation to the host nucleus. Forms a complex made of VirE2, host VIP1 and VIP2 and single-stranded DNA (ssDNA).

The protein localises to the secreted. It localises to the host nucleus. Functionally, involved in DNA transformation; mediates the nuclear uptake of single-stranded DNA copies of the transferred DNA (T-DNA) element. Binds single-stranded but not double-stranded DNA regardless of nucleotide sequence composition. This Agrobacterium fabrum (strain C58 / ATCC 33970) (Agrobacterium tumefaciens (strain C58)) protein is Single-strand DNA-binding protein (virE2).